We begin with the raw amino-acid sequence, 138 residues long: Putative pre-16S rRNA nuclease (138 aa).

The protein belongs to the YqgF nuclease family.

The protein localises to the cytoplasm. Its function is as follows. Could be a nuclease involved in processing of the 5'-end of pre-16S rRNA. The sequence is that of Putative pre-16S rRNA nuclease from Carboxydothermus hydrogenoformans (strain ATCC BAA-161 / DSM 6008 / Z-2901).